A 97-amino-acid polypeptide reads, in one-letter code: Acylphosphatase (97 aa).

The region spanning 9–97 (RKHIVVTGLV…ETARAFGVRQ (89 aa)) is the Acylphosphatase-like domain. Active-site residues include Arg24 and Asn42.

Belongs to the acylphosphatase family.

The enzyme catalyses an acyl phosphate + H2O = a carboxylate + phosphate + H(+). This chain is Acylphosphatase (acyP), found in Bifidobacterium longum (strain NCC 2705).